Here is a 430-residue protein sequence, read N- to C-terminus: Proteasome-activating nucleotidase (430 aa).

The stretch at 9 to 89 (TELKKEKKAF…LRRELDRMRV (81 aa)) forms a coiled coil. ATP is bound by residues 214-219 (GTGKTL) and H353. The interval 428–430 (LYR) is docks into pockets in the proteasome alpha-ring to cause gate opening.

It belongs to the AAA ATPase family. As to quaternary structure, homohexamer. The hexameric complex has a two-ring architecture resembling a top hat that caps the 20S proteasome core at one or both ends. Alone, can form a complex composed of two stacked hexameric rings in vitro. Upon ATP-binding, the C-terminus of PAN interacts with the alpha-rings of the proteasome core by binding to the intersubunit pockets.

The protein localises to the cytoplasm. ATPase activity is inhibited by EDTA, N-ethylmaleimide (NEM) and p-chloromercuriphenyl-sulfonic acid (PCMS) in vitro. In terms of biological role, ATPase which is responsible for recognizing, binding, unfolding and translocation of substrate proteins into the archaeal 20S proteasome core particle. Is essential for opening the gate of the 20S proteasome via an interaction with its C-terminus, thereby allowing substrate entry and access to the site of proteolysis. Thus, the C-termini of the proteasomal ATPase function like a 'key in a lock' to induce gate opening and therefore regulate proteolysis. Unfolding activity requires energy from ATP hydrolysis, whereas ATP binding alone promotes ATPase-20S proteasome association which triggers gate opening, and supports translocation of unfolded substrates. In addition to ATP, is able to cleave other nucleotide triphosphates such as CTP, GTP and UTP, but hydrolysis of these other nucleotides is less effective in promoting proteolysis than ATP. Moreover, PAN by itself can function as a chaperone in vitro. The polypeptide is Proteasome-activating nucleotidase (Methanocaldococcus jannaschii (strain ATCC 43067 / DSM 2661 / JAL-1 / JCM 10045 / NBRC 100440) (Methanococcus jannaschii)).